The chain runs to 111 residues: WAP four-disulfide core domain protein 12 (111 aa).

The first 23 residues, 1–23 (MGSSSFLVLMVSLALVTLVAAEG), serve as a signal peptide directing secretion. In terms of domain architecture, WAP spans 27 to 74 (GIEKAGVCPADNIRCFKSDPPQCHTDQDCLGERKCCYLHCGFKCVIPV). Disulfide bonds link cysteine 34/cysteine 62, cysteine 41/cysteine 66, cysteine 49/cysteine 61, and cysteine 55/cysteine 70. The interval 80–111 (GGNKDEDVSGPCPEPGWEAKSPGSSSTGCPQK) is disordered. The segment covering 101–111 (PGSSSTGCPQK) has biased composition (polar residues).

It localises to the secreted. Functionally, antibacterial protein. Putative acid-stable proteinase inhibitor. The polypeptide is WAP four-disulfide core domain protein 12 (WFDC12) (Macaca mulatta (Rhesus macaque)).